Reading from the N-terminus, the 396-residue chain is L-lactate dehydrogenase (396 aa).

The FMN hydroxy acid dehydrogenase domain maps to 1–380; the sequence is MIISAASDYR…SGDSLVQELG (380 aa). Tyr24 contacts substrate. FMN contacts are provided by Ser106 and Gln127. Tyr129 serves as a coordination point for substrate. Residue Thr155 coordinates FMN. Arg164 is a binding site for substrate. Lys251 serves as a coordination point for FMN. His275 serves as the catalytic Proton acceptor. Substrate is bound at residue Arg278. Residue 306 to 330 participates in FMN binding; it reads DSGIRNGLDVVRMIALGADTVLLGR.

Belongs to the FMN-dependent alpha-hydroxy acid dehydrogenase family. FMN is required as a cofactor.

The protein resides in the cell inner membrane. It carries out the reaction (S)-lactate + A = pyruvate + AH2. Functionally, catalyzes the conversion of L-lactate to pyruvate. Is coupled to the respiratory chain. The polypeptide is L-lactate dehydrogenase (Salmonella paratyphi A (strain ATCC 9150 / SARB42)).